Here is a 380-residue protein sequence, read N- to C-terminus: Alcohol dehydrogenase 1 (380 aa).

8 residues coordinate Zn(2+): cysteine 48, threonine 50, histidine 70, cysteine 100, cysteine 103, cysteine 106, cysteine 114, and cysteine 178. An alcohol-binding residues include threonine 50 and histidine 70. Threonine 50 contributes to the NAD(+) binding site. NAD(+)-binding positions include 203–208 (GLGAVG), aspartate 227, arginine 232, threonine 273, valine 296, 296–298 (VGV), and arginine 373.

The protein belongs to the zinc-containing alcohol dehydrogenase family. As to quaternary structure, homodimer. Zn(2+) is required as a cofactor.

The protein resides in the cytoplasm. It carries out the reaction a primary alcohol + NAD(+) = an aldehyde + NADH + H(+). The catalysed reaction is a secondary alcohol + NAD(+) = a ketone + NADH + H(+). The sequence is that of Alcohol dehydrogenase 1 (ADH1) from Trifolium repens (Creeping white clover).